Consider the following 127-residue polypeptide: Glycine cleavage system H protein (127 aa).

One can recognise a Lipoyl-binding domain in the interval 22-104; that stretch reads TVRIGITDFA…YDKAWMIVIE (83 aa). Lys63 bears the N6-lipoyllysine mark.

It belongs to the GcvH family. In terms of assembly, the glycine cleavage system is composed of four proteins: P, T, L and H. (R)-lipoate serves as cofactor.

In terms of biological role, the glycine cleavage system catalyzes the degradation of glycine. The H protein shuttles the methylamine group of glycine from the P protein to the T protein. Its function is as follows. Is also involved in protein lipoylation via its role as an octanoyl/lipoyl carrier protein intermediate. This Anoxybacillus flavithermus (strain DSM 21510 / WK1) protein is Glycine cleavage system H protein.